We begin with the raw amino-acid sequence, 193 residues long: Adenine phosphoribosyltransferase (193 aa).

The protein belongs to the purine/pyrimidine phosphoribosyltransferase family. As to quaternary structure, homodimer.

Its subcellular location is the cytoplasm. The enzyme catalyses AMP + diphosphate = 5-phospho-alpha-D-ribose 1-diphosphate + adenine. Its pathway is purine metabolism; AMP biosynthesis via salvage pathway; AMP from adenine: step 1/1. In terms of biological role, catalyzes a salvage reaction resulting in the formation of AMP, that is energically less costly than de novo synthesis. The protein is Adenine phosphoribosyltransferase of Bifidobacterium adolescentis (strain ATCC 15703 / DSM 20083 / NCTC 11814 / E194a).